Consider the following 120-residue polypeptide: Small ribosomal subunit protein uS13 (120 aa).

The interval 93–120 (RKGLPVRGQTTKNNARTRKGKKKTVGSK) is disordered. Residues 107 to 120 (ARTRKGKKKTVGSK) are compositionally biased toward basic residues.

Belongs to the universal ribosomal protein uS13 family. In terms of assembly, part of the 30S ribosomal subunit. Forms a loose heterodimer with protein S19. Forms two bridges to the 50S subunit in the 70S ribosome.

Located at the top of the head of the 30S subunit, it contacts several helices of the 16S rRNA. In the 70S ribosome it contacts the 23S rRNA (bridge B1a) and protein L5 of the 50S subunit (bridge B1b), connecting the 2 subunits; these bridges are implicated in subunit movement. Contacts the tRNAs in the A and P-sites. The protein is Small ribosomal subunit protein uS13 of Helicobacter pylori (strain P12).